Reading from the N-terminus, the 60-residue chain is Cytotoxin 5 (60 aa).

Disulfide bonds link C3–C21, C14–C38, C42–C53, and C54–C59.

It belongs to the three-finger toxin family. Short-chain subfamily. Type IA cytotoxin sub-subfamily. Monomer in solution; Homodimer and oligomer in the presence of negatively charged lipids forming a pore with a size ranging between 20 and 30 Angstroms. In terms of tissue distribution, expressed by the venom gland.

The protein resides in the secreted. The protein localises to the target cell membrane. In terms of biological role, basic protein that binds to cell membrane and depolarizes cardiomyocytes. It also possesses lytic activity on many other cells, including red blood cells. Interaction with sulfatides in the cell membrane induces pore formation and cell internalization and is responsible for cytotoxicity in cardiomyocytes. It targets the mitochondrial membrane and induces mitochondrial swelling and fragmentation. Inhibits protein kinases C. It binds to the integrin alpha-V/beta-3 with a moderate affinity. Is cardiotoxic and cytocidal to Yoshida sarcoma cells. This chain is Cytotoxin 5, found in Naja atra (Chinese cobra).